A 209-amino-acid chain; its full sequence is NAD(P)H-quinone oxidoreductase subunit K 2 (209 aa).

4 residues coordinate [4Fe-4S] cluster: cysteine 53, cysteine 54, cysteine 118, and cysteine 149.

Belongs to the complex I 20 kDa subunit family. In terms of assembly, NDH-1 can be composed of about 15 different subunits; different subcomplexes with different compositions have been identified which probably have different functions. It depends on [4Fe-4S] cluster as a cofactor.

Its subcellular location is the cellular thylakoid membrane. It catalyses the reaction a plastoquinone + NADH + (n+1) H(+)(in) = a plastoquinol + NAD(+) + n H(+)(out). It carries out the reaction a plastoquinone + NADPH + (n+1) H(+)(in) = a plastoquinol + NADP(+) + n H(+)(out). Its function is as follows. NDH-1 shuttles electrons from an unknown electron donor, via FMN and iron-sulfur (Fe-S) centers, to quinones in the respiratory and/or the photosynthetic chain. The immediate electron acceptor for the enzyme in this species is believed to be plastoquinone. Couples the redox reaction to proton translocation, and thus conserves the redox energy in a proton gradient. Cyanobacterial NDH-1 also plays a role in inorganic carbon-concentration. The polypeptide is NAD(P)H-quinone oxidoreductase subunit K 2 (Acaryochloris marina (strain MBIC 11017)).